We begin with the raw amino-acid sequence, 156 residues long: MNKQVEIFTDGSCLGNPGPGGYGIVMRYKQVEKTLARGYRLTTNNRMEMLAAVMALQALKEPCRVILTTDSQYVRQGITQWIHNWKLRGWKTADKKPVKNADLWQALDKETARHQVEWRWVKGHAGHRENEMCDELARQAAENPTEDDIGYQPEPQ.

One can recognise an RNase H type-1 domain in the interval 1-142; sequence MNKQVEIFTD…CDELARQAAE (142 aa). Residues aspartate 10, glutamate 48, aspartate 70, and aspartate 134 each coordinate Mg(2+). A disordered region spans residues 135–156; sequence ELARQAAENPTEDDIGYQPEPQ.

The protein belongs to the RNase H family. In terms of assembly, monomer. Mg(2+) serves as cofactor.

It localises to the cytoplasm. The catalysed reaction is Endonucleolytic cleavage to 5'-phosphomonoester.. Functionally, endonuclease that specifically degrades the RNA of RNA-DNA hybrids. The sequence is that of Ribonuclease H from Vibrio cholerae serotype O1 (strain M66-2).